The following is a 610-amino-acid chain: UvrABC system protein C (610 aa).

Residues 16 to 94 (SQPGVYRMYD…IKLYQPRYNV (79 aa)) form the GIY-YIG domain. In terms of domain architecture, UVR spans 204–239 (DQVLTQLISRMETASQNLEFEEAARIRDQIQAVRRV).

It belongs to the UvrC family. As to quaternary structure, interacts with UvrB in an incision complex.

It is found in the cytoplasm. Its function is as follows. The UvrABC repair system catalyzes the recognition and processing of DNA lesions. UvrC both incises the 5' and 3' sides of the lesion. The N-terminal half is responsible for the 3' incision and the C-terminal half is responsible for the 5' incision. This Escherichia coli (strain ATCC 8739 / DSM 1576 / NBRC 3972 / NCIMB 8545 / WDCM 00012 / Crooks) protein is UvrABC system protein C.